We begin with the raw amino-acid sequence, 313 residues long: E3 ubiquitin-protein ligase RNF126 (313 aa).

Residue alanine 2 is modified to N-acetylalanine. Phosphoserine is present on serine 5. A required for interaction with BAG6 region spans residues 5 to 100; sequence SPQPGRYFCH…FEIPTFPPGA (96 aa). Residues cysteine 13, cysteine 16, cysteine 29, and cysteine 32 each contribute to the Zn(2+) site. The C4-type zinc finger occupies 13 to 32; sequence CHCCSVEIVPRLPDYICPRC. Disordered stretches follow at residues 42–63 and 95–128; these read EETRNTENGSAPSTAPTDQNRQ and TFPPGAQADDGRDPESRREREHQSRHRYGARQPR. Over residues 47–63 the composition is skewed to polar residues; the sequence is TENGSAPSTAPTDQNRQ. Positions 103-116 are enriched in basic and acidic residues; it reads DDGRDPESRREREH. Residues 117 to 128 are compositionally biased toward basic residues; it reads QSRHRYGARQPR. A sufficient for interaction with AICDA region spans residues 202-306; sequence TGPPPADKEK…SSSSSSSPSN (105 aa). The segment at 231 to 272 adopts an RING-type zinc-finger fold; it reads CPVCKEDYALGESVRQLPCNHLFHDSCIVPWLEQHDSCPVCR. The tract at residues 279 to 313 is disordered; it reads NTATNPPGLTGVGFSSSSSSSSSSSPSNENATSNS. Positions 293–313 are enriched in low complexity; sequence SSSSSSSSSSSPSNENATSNS.

In terms of assembly, interacts with CCDC50, EGFR, FLT3 and SCAMP3. Interacts with BAG6 (via ubiquitin-like domain); required for BAG6-dependent ubiquitination of proteins mislocalized to the cytosol. Interacts with CDKN1A. Interacts with AICDA. Post-translationally, ubiquitinated. May undergo autoubiquitination. As to expression, detected in B-cells (at protein level).

The protein localises to the cytoplasm. The protein resides in the nucleus. The catalysed reaction is S-ubiquitinyl-[E2 ubiquitin-conjugating enzyme]-L-cysteine + [acceptor protein]-L-lysine = [E2 ubiquitin-conjugating enzyme]-L-cysteine + N(6)-ubiquitinyl-[acceptor protein]-L-lysine.. The protein operates within protein modification; protein ubiquitination. Functionally, E3 ubiquitin-protein ligase that mediates ubiquitination oF target proteins. Depending on the associated E2 ligase, mediates 'Lys-27'-, 'Lys-29'-, 'Lys-48'- and/or 'Lys-63'-linked polyubiquitination of substrates. Part of a BAG6-dependent quality control process ensuring that proteins of the secretory pathway that are mislocalized to the cytosol are degraded by the proteasome. Probably acts by providing the ubiquitin ligase activity associated with the BAG6 complex and be responsible for ubiquitination of the hydrophobic mislocalized proteins and their targeting to the proteasome. May also play a role in the endosomal recycling of IGF2R, the cation-independent mannose-6-phosphate receptor. May play a role in the endosomal sorting and degradation of several membrane receptors including EGFR, FLT3, MET and CXCR4, by mediating their ubiquitination. By ubiquitinating CDKN1A/p21 and targeting it for degradation, may also promote cell proliferation. May monoubiquitinate AICDA. Acts as a regulator of DNA repair by mediating 'Lys-27'- and 'Lys-29'-linked polyubiquitination of MRE11, thereby promoting the exonuclease activity of MRE11. The sequence is that of E3 ubiquitin-protein ligase RNF126 from Mus musculus (Mouse).